We begin with the raw amino-acid sequence, 426 residues long: Dihydroorotase (426 aa).

Zn(2+) contacts are provided by histidine 58 and histidine 60. Substrate contacts are provided by residues 60–62 and asparagine 92; that span reads HLR. Zn(2+)-binding residues include aspartate 150, histidine 177, and histidine 230. Residue asparagine 276 participates in substrate binding. Aspartate 303 lines the Zn(2+) pocket. Aspartate 303 is a catalytic residue. Substrate-binding positions include histidine 307 and 321 to 322; that span reads FG.

It belongs to the metallo-dependent hydrolases superfamily. DHOase family. Class I DHOase subfamily. Zn(2+) serves as cofactor.

It catalyses the reaction (S)-dihydroorotate + H2O = N-carbamoyl-L-aspartate + H(+). Its pathway is pyrimidine metabolism; UMP biosynthesis via de novo pathway; (S)-dihydroorotate from bicarbonate: step 3/3. Its function is as follows. Catalyzes the reversible cyclization of carbamoyl aspartate to dihydroorotate. In Listeria monocytogenes serotype 4b (strain CLIP80459), this protein is Dihydroorotase.